A 935-amino-acid polypeptide reads, in one-letter code: LPS-assembly protein LptD (935 aa).

The first 33 residues, 1-33 (MALKSPAFRRKFPLLVTGGLLALQPLATSYVVA), serve as a signal peptide directing secretion. A disordered region spans residues 52–85 (KTPVNNLPPRPVHEGAAVSSGTEAAGEAETADRP). Residues 65–79 (EGAAVSSGTEAAGEA) show a composition bias toward low complexity.

Belongs to the LptD family. As to quaternary structure, component of the lipopolysaccharide transport and assembly complex. Interacts with LptE and LptA.

Its subcellular location is the cell outer membrane. Its function is as follows. Together with LptE, is involved in the assembly of lipopolysaccharide (LPS) at the surface of the outer membrane. This Pseudomonas putida (strain ATCC 700007 / DSM 6899 / JCM 31910 / BCRC 17059 / LMG 24140 / F1) protein is LPS-assembly protein LptD.